A 436-amino-acid polypeptide reads, in one-letter code: UDP-N-acetylmuramate--L-alanine ligase (436 aa).

Residue 110–116 (GAHGKTS) coordinates ATP.

Belongs to the MurCDEF family.

It localises to the cytoplasm. The enzyme catalyses UDP-N-acetyl-alpha-D-muramate + L-alanine + ATP = UDP-N-acetyl-alpha-D-muramoyl-L-alanine + ADP + phosphate + H(+). Its pathway is cell wall biogenesis; peptidoglycan biosynthesis. Functionally, cell wall formation. This is UDP-N-acetylmuramate--L-alanine ligase from Lacticaseibacillus casei (strain BL23) (Lactobacillus casei).